The sequence spans 208 residues: Ribonuclease HII (208 aa).

The RNase H type-2 domain maps to 18–208 (GFYAGVDEVG…RPVKERLEAC (191 aa)). Residues aspartate 24, glutamate 25, and aspartate 116 each contribute to the a divalent metal cation site.

This sequence belongs to the RNase HII family. Mn(2+) is required as a cofactor. It depends on Mg(2+) as a cofactor.

The protein resides in the cytoplasm. The enzyme catalyses Endonucleolytic cleavage to 5'-phosphomonoester.. Endonuclease that specifically degrades the RNA of RNA-DNA hybrids. This chain is Ribonuclease HII, found in Shewanella loihica (strain ATCC BAA-1088 / PV-4).